The chain runs to 379 residues: L-lactate dehydrogenase (379 aa).

Residues 1–379 (MIISASTDYR…IGRDSLVSLP (379 aa)) enclose the FMN hydroxy acid dehydrogenase domain. A substrate-binding site is contributed by Tyr-24. FMN-binding residues include Ser-106 and Gln-127. Position 129 (Tyr-129) interacts with substrate. Thr-155 lines the FMN pocket. Position 164 (Arg-164) interacts with substrate. Lys-251 contacts FMN. The Proton acceptor role is filled by His-275. Residue Arg-278 participates in substrate binding. 306 to 330 (DSGIRTGLDVVRMLALGADTVLLGR) contacts FMN.

The protein belongs to the FMN-dependent alpha-hydroxy acid dehydrogenase family. Requires FMN as cofactor.

The protein resides in the cell inner membrane. The catalysed reaction is (S)-lactate + A = pyruvate + AH2. Its function is as follows. Catalyzes the conversion of L-lactate to pyruvate. Is coupled to the respiratory chain. The polypeptide is L-lactate dehydrogenase (Stenotrophomonas maltophilia (strain K279a)).